We begin with the raw amino-acid sequence, 379 residues long: Cytochrome b (379 aa).

The next 4 helical transmembrane spans lie at 32-52 (FGSLLGLCLATQILTGLFLAM), 76-97 (WLIRNMHANGASFFFICIYMHI), 112-132 (WNVGVILLLLVMMTAFVGYVL), and 177-197 (FFAFHFLFPFVIAAVTVIHLL). 2 residues coordinate heme b: His-82 and His-96. Heme b is bound by residues His-181 and His-195. His-200 contacts a ubiquinone. The next 4 membrane-spanning stretches (helical) occupy residues 225 to 245 (YKDLLGFIIMMVALTSLALFS), 287 to 307 (LGGVLALLASILVLMLVPFLH), 319 to 339 (LTQILFWTFVANVIILTWIGG), and 346 to 366 (FIIIGQVASFLYFLLLLVLSP).

The protein belongs to the cytochrome b family. The cytochrome bc1 complex contains 3 respiratory subunits (MT-CYB, CYC1 and UQCRFS1), 2 core proteins (UQCRC1 and UQCRC2) and probably 6 low-molecular weight proteins. It depends on heme b as a cofactor.

It localises to the mitochondrion inner membrane. Its function is as follows. Component of the ubiquinol-cytochrome c reductase complex (complex III or cytochrome b-c1 complex) that is part of the mitochondrial respiratory chain. The b-c1 complex mediates electron transfer from ubiquinol to cytochrome c. Contributes to the generation of a proton gradient across the mitochondrial membrane that is then used for ATP synthesis. The sequence is that of Cytochrome b (mt-cyb) from Chlorophthalmus agassizi (Shortnose greeneye).